Here is a 955-residue protein sequence, read N- to C-terminus: Kinesin-like protein NACK2 (955 aa).

Positions 36 to 357 (KILVTIRVRP…LCFATSAKEV (322 aa)) constitute a Kinesin motor domain. An ATP-binding site is contributed by 120-127 (GQTSSGKT). Coiled-coil stretches lie at residues 366 to 443 (VVAE…LKGS) and 566 to 604 (KASLKEEIARLRSQESNIASLEQKLENVQRSIDELVMHL).

The protein belongs to the TRAFAC class myosin-kinesin ATPase superfamily. Kinesin family. KIN-7 subfamily.

Its subcellular location is the cytoplasm. The protein localises to the nucleus. It localises to the cytoskeleton. It is found in the phragmoplast. In terms of biological role, probable plus end-directed motor protein that may function in the NACK-PQR (NPK1-NQK1/MEK1-NRK1) MAP kinase signaling pathway, which is essential for somatic cell cytokinesis, especially for the cell-plate formation and its expansion. May regulate the activity and the localization of NPK1, probably by association through the non-catalytic region of the kinase. The protein is Kinesin-like protein NACK2 (NACK2) of Nicotiana tabacum (Common tobacco).